The following is a 2380-amino-acid chain: DNA polymerase epsilon catalytic subunit A (2380 aa).

Over residues 169–196 (YYNKGNNNNNNHQNYNNNNNQNNNNFNK) the composition is skewed to low complexity. Disordered stretches follow at residues 169–209 (YYNK…NNSK), 1178–1210 (FFEKTEDNDQDNDNDNDNDNDNDNDNSKPQQTD), 1766–1787 (KNTSNNSNTKNGANQNTTNDTT), 1967–1998 (QQQQQQQDNADDDDDDDVSENEEEQQQNKNKK), and 2059–2120 (KIST…TTTS). Positions 1183–1201 (EDNDQDNDNDNDNDNDNDN) are enriched in acidic residues. Residues 1767 to 1776 (NTSNNSNTKN) are compositionally biased toward low complexity. Polar residues predominate over residues 1777–1787 (GANQNTTNDTT). Acidic residues predominate over residues 1975 to 1991 (NADDDDDDDVSENEEEQ). 2 stretches are compositionally biased toward low complexity: residues 2059–2081 (KISTTSSSSNNDSTAATTTTTKD) and 2110–2120 (SSSSSTTTTTS). Residues C2225 and C2228 each coordinate Zn(2+). The CysA-type zinc-finger motif lies at 2225 to 2288 (CSSCHSCRDI…RVPELSCIQC (64 aa)). The span at 2245–2258 (ISSRLSSQQKSNNN) shows a compositional bias: low complexity. Residues 2245 to 2275 (ISSRLSSQQKSNNNDSDDSDDDNEENEGDDD) form a disordered region. Over residues 2259–2275 (DSDDSDDDNEENEGDDD) the composition is skewed to acidic residues. Residues C2285 and C2288 each contribute to the Zn(2+) site. Positions 2319, 2322, 2334, and 2337 each coordinate [4Fe-4S] cluster. The short motif at 2319–2337 (CSKCNDVKSDNLGDICPQC) is the CysB motif element.

The protein belongs to the DNA polymerase type-B family. As to quaternary structure, consists of three subunits: pole, pole2 and pole3. The cofactor is [4Fe-4S] cluster.

The protein localises to the nucleus. The catalysed reaction is DNA(n) + a 2'-deoxyribonucleoside 5'-triphosphate = DNA(n+1) + diphosphate. DNA polymerase II participates in chromosomal DNA replication. The chain is DNA polymerase epsilon catalytic subunit A (pole) from Dictyostelium discoideum (Social amoeba).